Reading from the N-terminus, the 21-residue chain is Nitrilase (21 aa).

It belongs to the carbon-nitrogen hydrolase superfamily. Nitrilase family.

The catalysed reaction is a nitrile + 2 H2O = a carboxylate + NH4(+). In terms of biological role, acts on many kinds of nitrile compounds such as aliphatic, aromatic, and heterocyclic mononitriles or dinitriles. Prefers S-(-)-2-(4'-isobutylphenyl)-propionitrile to R-(+)-2-(4'-isobutylphenyl)-propionitrile as the substrate. In Acinetobacter sp. (strain AK226), this protein is Nitrilase.